The primary structure comprises 298 residues: GTPase Era (298 aa).

The 168-residue stretch at 4 to 171 folds into the Era-type G domain; the sequence is RAGFVALIGR…KEKIVSFLPE (168 aa). Residues 12–19 form a G1 region; that stretch reads GRTNVGKS. Residue 12 to 19 coordinates GTP; sequence GRTNVGKS. A G2 region spans residues 38–42; that stretch reads QTTRN. A G3 region spans residues 59 to 62; sequence DTPG. Residues 59–63 and 121–124 each bind GTP; these read DTPGI and NKID. A G4 region spans residues 121–124; that stretch reads NKID. A G5 region spans residues 150 to 152; sequence ISA. The KH type-2 domain maps to 202–280; that stretch reads LEEEVPHGVY…FLQLWVKVRK (79 aa).

This sequence belongs to the TRAFAC class TrmE-Era-EngA-EngB-Septin-like GTPase superfamily. Era GTPase family. As to quaternary structure, monomer.

It is found in the cytoplasm. The protein localises to the cell membrane. In terms of biological role, an essential GTPase that binds both GDP and GTP, with rapid nucleotide exchange. Plays a role in 16S rRNA processing and 30S ribosomal subunit biogenesis and possibly also in cell cycle regulation and energy metabolism. This chain is GTPase Era, found in Caldanaerobacter subterraneus subsp. tengcongensis (strain DSM 15242 / JCM 11007 / NBRC 100824 / MB4) (Thermoanaerobacter tengcongensis).